Here is a 584-residue protein sequence, read N- to C-terminus: Putative adenine deaminase BA_3032/GBAA_3032/BAS2818 (584 aa).

This sequence belongs to the metallo-dependent hydrolases superfamily. Adenine deaminase family.

The enzyme catalyses adenine + H2O + H(+) = hypoxanthine + NH4(+). The polypeptide is Putative adenine deaminase BA_3032/GBAA_3032/BAS2818 (Bacillus anthracis).